The sequence spans 166 residues: Protein-export protein SecB (166 aa).

It belongs to the SecB family. Homotetramer, a dimer of dimers. One homotetramer interacts with 1 SecA dimer.

It is found in the cytoplasm. Its function is as follows. One of the proteins required for the normal export of preproteins out of the cell cytoplasm. It is a molecular chaperone that binds to a subset of precursor proteins, maintaining them in a translocation-competent state. It also specifically binds to its receptor SecA. The chain is Protein-export protein SecB from Roseobacter denitrificans (strain ATCC 33942 / OCh 114) (Erythrobacter sp. (strain OCh 114)).